Here is a 286-residue protein sequence, read N- to C-terminus: Phosphatidylserine decarboxylase proenzyme (286 aa).

Residues Asp-90, His-147, and Ser-252 each act as charge relay system; for autoendoproteolytic cleavage activity in the active site. Ser-252 acts as the Schiff-base intermediate with substrate; via pyruvic acid; for decarboxylase activity in catalysis. Residue Ser-252 is modified to Pyruvic acid (Ser); by autocatalysis.

It belongs to the phosphatidylserine decarboxylase family. PSD-B subfamily. Prokaryotic type I sub-subfamily. As to quaternary structure, heterodimer of a large membrane-associated beta subunit and a small pyruvoyl-containing alpha subunit. The cofactor is pyruvate. Post-translationally, is synthesized initially as an inactive proenzyme. Formation of the active enzyme involves a self-maturation process in which the active site pyruvoyl group is generated from an internal serine residue via an autocatalytic post-translational modification. Two non-identical subunits are generated from the proenzyme in this reaction, and the pyruvate is formed at the N-terminus of the alpha chain, which is derived from the carboxyl end of the proenzyme. The autoendoproteolytic cleavage occurs by a canonical serine protease mechanism, in which the side chain hydroxyl group of the serine supplies its oxygen atom to form the C-terminus of the beta chain, while the remainder of the serine residue undergoes an oxidative deamination to produce ammonia and the pyruvoyl prosthetic group on the alpha chain. During this reaction, the Ser that is part of the protease active site of the proenzyme becomes the pyruvoyl prosthetic group, which constitutes an essential element of the active site of the mature decarboxylase.

Its subcellular location is the cell membrane. The enzyme catalyses a 1,2-diacyl-sn-glycero-3-phospho-L-serine + H(+) = a 1,2-diacyl-sn-glycero-3-phosphoethanolamine + CO2. It functions in the pathway phospholipid metabolism; phosphatidylethanolamine biosynthesis; phosphatidylethanolamine from CDP-diacylglycerol: step 2/2. In terms of biological role, catalyzes the formation of phosphatidylethanolamine (PtdEtn) from phosphatidylserine (PtdSer). This Azotobacter vinelandii (strain DJ / ATCC BAA-1303) protein is Phosphatidylserine decarboxylase proenzyme.